The following is a 354-amino-acid chain: Inactive ADP-ribosyltransferase arh2 (354 aa).

Belongs to the ADP-ribosylglycohydrolase family. In terms of tissue distribution, expressed in heart (at protein level). A short form is detected in both heart and tadpole tail (at protein level).

The protein localises to the cytoplasm. The protein resides in the myofibril. It localises to the sarcomere. In terms of biological role, required for myofibril assembly and outgrowth of the cardiac chambers in the developing heart. Appears to be catalytically inactive, showing no activity against O-acetyl-ADP-ribose. This chain is Inactive ADP-ribosyltransferase arh2 (adprhl1), found in Xenopus laevis (African clawed frog).